A 90-amino-acid polypeptide reads, in one-letter code: Small ribosomal subunit protein bS16 (90 aa).

It belongs to the bacterial ribosomal protein bS16 family.

The chain is Small ribosomal subunit protein bS16 from Bacillus velezensis (strain DSM 23117 / BGSC 10A6 / LMG 26770 / FZB42) (Bacillus amyloliquefaciens subsp. plantarum).